The chain runs to 302 residues: MAAAEAAAAVGKQQQKGGGGRGGGGGGPAPFLTKTNQMVEESATDEVISWGKEGRSFVVWKPVEFARDLLPLHFKHCNFSSFVRQLNTYGFRKVVPDRWEFANGNFRRGEQGLLSGIRRRKATTPQSSKSCGSGVNVAFPPPLPPLPPEPSATTSSGNDRSSSSASSPPRADITSENEQLRKDNQTLTMELARARRHCEELLGFLSRFLDVRQLDLRLLMQEDMRAAAGGVGGEQRVQEHAREEKCVKLFGVLLDDTHGAATRKRARCEEAAASERPIKMIRIGEPWVSVPSSGPARCGGDN.

Positions 1 to 15 are enriched in low complexity; it reads MAAAEAAAAVGKQQQ. Disordered stretches follow at residues 1-33 and 116-184; these read MAAAEAAAAVGKQQQKGGGGRGGGGGGPAPFLT and GIRR…RKDN. Residues 16–28 show a composition bias toward gly residues; that stretch reads KGGGGRGGGGGGP. Positions 123–133 are enriched in polar residues; it reads TTPQSSKSCGS. The segment covering 139-150 has biased composition (pro residues); that stretch reads FPPPLPPLPPEP. The segment covering 151-172 has biased composition (low complexity); sequence SATTSSGNDRSSSSASSPPRAD. Positions 170 to 202 form a coiled coil; sequence RADITSENEQLRKDNQTLTMELARARRHCEELL. A hydrophobic repeat HR-A/B region spans residues 180-209; sequence LRKDNQTLTMELARARRHCEELLGFLSRFL. The Nuclear export signal motif lies at 211 to 218; sequence VRQLDLRL. Positions 263–267 match the Nuclear localization signal motif; the sequence is RKRAR.

The protein belongs to the HSF family. Class B subfamily. In terms of assembly, homotrimer. Exhibits temperature-dependent phosphorylation.

The protein resides in the cytoplasm. It localises to the nucleus. Its function is as follows. Transcriptional regulator that specifically binds DNA of heat shock promoter elements (HSE). This Oryza sativa subsp. japonica (Rice) protein is Heat stress transcription factor B-1 (HSFB1).